We begin with the raw amino-acid sequence, 98 residues long: Large ribosomal subunit protein eL21 (98 aa).

Residues 1-23 form a disordered region; sequence MVDRKGKGFRRKTRDKLSKHPRQ. Positions 7-23 are enriched in basic residues; sequence KGFRRKTRDKLSKHPRQ.

Belongs to the eukaryotic ribosomal protein eL21 family.

This is Large ribosomal subunit protein eL21 from Nanoarchaeum equitans (strain Kin4-M).